Reading from the N-terminus, the 227-residue chain is Orotidine 5'-phosphate decarboxylase (227 aa).

Residues Asp8, Lys30, 59-68 (DLKLYDIPYT), Thr118, Arg178, Gln187, Gly207, and Arg208 contribute to the substrate site. Lys61 serves as the catalytic Proton donor.

This sequence belongs to the OMP decarboxylase family. Type 1 subfamily. As to quaternary structure, homodimer.

The catalysed reaction is orotidine 5'-phosphate + H(+) = UMP + CO2. The protein operates within pyrimidine metabolism; UMP biosynthesis via de novo pathway; UMP from orotate: step 2/2. In terms of biological role, catalyzes the decarboxylation of orotidine 5'-monophosphate (OMP) to uridine 5'-monophosphate (UMP). This Helicobacter pylori (strain Shi470) protein is Orotidine 5'-phosphate decarboxylase.